The primary structure comprises 489 residues: Putative BTB/POZ domain-containing protein R773 (489 aa).

The region spanning 3-73 (SNIELVITDE…GNTSYKFQDK (71 aa)) is the BTB domain.

Belongs to the mimivirus BTB/WD family.

This is Putative BTB/POZ domain-containing protein R773 from Acanthamoeba polyphaga (Amoeba).